We begin with the raw amino-acid sequence, 208 residues long: MVEWIEIQYPIEYSEAYKMMKSRLTGILNGTASEAVFILEHQDVYTAGISAKNDELLNCYDIPVHHTDRGGKFTYHGPGQIIIYPVINLAANGRVKDIRNYVNNLASLVINSLKFFNIIGITVQDTIGVWIDSEFGRKKIASIGVRIHKWITYHGVAINVCPDLKKFKGIIPCGDRDTIVTSINELLDQKIDLDYYKAILKQEFYKIF.

The BPL/LPL catalytic domain maps to 30 to 208 (GTASEAVFIL…ILKQEFYKIF (179 aa)). Substrate-binding positions include 69–76 (RGGKFTYH), 142–144 (SIG), and 155–157 (GVA). Cysteine 173 acts as the Acyl-thioester intermediate in catalysis.

The protein belongs to the LipB family.

It localises to the cytoplasm. The catalysed reaction is octanoyl-[ACP] + L-lysyl-[protein] = N(6)-octanoyl-L-lysyl-[protein] + holo-[ACP] + H(+). Its pathway is protein modification; protein lipoylation via endogenous pathway; protein N(6)-(lipoyl)lysine from octanoyl-[acyl-carrier-protein]: step 1/2. Functionally, catalyzes the transfer of endogenously produced octanoic acid from octanoyl-acyl-carrier-protein onto the lipoyl domains of lipoate-dependent enzymes. Lipoyl-ACP can also act as a substrate although octanoyl-ACP is likely to be the physiological substrate. In Orientia tsutsugamushi (strain Boryong) (Rickettsia tsutsugamushi), this protein is Octanoyltransferase.